Reading from the N-terminus, the 436-residue chain is Trigger factor (436 aa).

The PPIase FKBP-type domain maps to 161-246 (GDQVIVDFDG…VREVKEPTLP (86 aa)).

Belongs to the FKBP-type PPIase family. Tig subfamily.

The protein resides in the cytoplasm. The catalysed reaction is [protein]-peptidylproline (omega=180) = [protein]-peptidylproline (omega=0). Involved in protein export. Acts as a chaperone by maintaining the newly synthesized protein in an open conformation. Functions as a peptidyl-prolyl cis-trans isomerase. This chain is Trigger factor, found in Thioalkalivibrio sulfidiphilus (strain HL-EbGR7).